The following is a 336-amino-acid chain: MKPKVFITRAIPENGINMLEEEFEVEVWEEEREIPREKLLEKVKDVDALVTMLSERIDQEVFENAPRLRIVANYAVGYDNIDVEEATRRGIYVTNTPDVLTNATADHAFALLLATARHVVKGDKFVRSGEWKRKGIAWHPKWFLGYELYGKTIGIVGFGRIGQAIARRAKGFNMRILYYSRTRKSQAEKELGAEYRPLEEVLKESDFVILAVPLTKETMYMINEERLKLMKPTAILVNIARGKVVDTKALIKALKEGWIAGAGLDVFEEEPYYNEELFSLDNVVLTPHIGSATFEAREAMAELVARNLIAFKRGEIPPTLVNKEVIKIRKPGFNEQ.

Residues 158-161 (FGRI), 180-182 (SRT), and 239-241 (IAR) each bind NADP(+). Catalysis depends on residues Arg-241 and Glu-270. His-288 acts as the Proton donor in catalysis. Residue 288-290 (HIG) participates in NADP(+) binding.

Belongs to the D-isomer specific 2-hydroxyacid dehydrogenase family. GyaR subfamily. Homodimer.

It is found in the cytoplasm. It catalyses the reaction glycolate + NAD(+) = glyoxylate + NADH + H(+). This chain is Glyoxylate reductase, found in Pyrococcus furiosus (strain ATCC 43587 / DSM 3638 / JCM 8422 / Vc1).